Consider the following 113-residue polypeptide: U11-theraphotoxin-Hhn1a (113 aa).

An N-terminal signal peptide occupies residues 1–21; sequence MNTVRVTFLLVFVLAVSLGRA. A propeptide spanning residues 22 to 74 is cleaved from the precursor; sequence DKDENRMEMQEKTEQGKSYLDFAENLLLQKLEELEAKLLEEDSEESRNSRQKR. Disulfide bonds link Cys-75–Cys-90, Cys-82–Cys-95, and Cys-89–Cys-110.

This sequence belongs to the neurotoxin 14 (magi-1) family. 01 (HNTX-16) subfamily. In terms of tissue distribution, expressed by the venom gland.

It localises to the secreted. Probable ion channel inhibitor. The protein is U11-theraphotoxin-Hhn1a of Cyriopagopus hainanus (Chinese bird spider).